A 146-amino-acid polypeptide reads, in one-letter code: Probable cyclic pyranopterin monophosphate synthase (146 aa).

Substrate contacts are provided by residues 66 to 68 (LTH) and 102 to 103 (ME). D117 is a catalytic residue.

Belongs to the MoaC family. Homohexamer; trimer of dimers.

It carries out the reaction (8S)-3',8-cyclo-7,8-dihydroguanosine 5'-triphosphate = cyclic pyranopterin phosphate + diphosphate. It participates in cofactor biosynthesis; molybdopterin biosynthesis. Its function is as follows. Catalyzes the conversion of (8S)-3',8-cyclo-7,8-dihydroguanosine 5'-triphosphate to cyclic pyranopterin monophosphate (cPMP). The polypeptide is Probable cyclic pyranopterin monophosphate synthase (Aeropyrum pernix (strain ATCC 700893 / DSM 11879 / JCM 9820 / NBRC 100138 / K1)).